Here is a 509-residue protein sequence, read N- to C-terminus: ATP synthase subunit alpha (509 aa).

Gly169–Thr176 is a binding site for ATP.

Belongs to the ATPase alpha/beta chains family. In terms of assembly, F-type ATPases have 2 components, CF(1) - the catalytic core - and CF(0) - the membrane proton channel. CF(1) has five subunits: alpha(3), beta(3), gamma(1), delta(1), epsilon(1). CF(0) has three main subunits: a(1), b(2) and c(9-12). The alpha and beta chains form an alternating ring which encloses part of the gamma chain. CF(1) is attached to CF(0) by a central stalk formed by the gamma and epsilon chains, while a peripheral stalk is formed by the delta and b chains.

It localises to the cell inner membrane. It catalyses the reaction ATP + H2O + 4 H(+)(in) = ADP + phosphate + 5 H(+)(out). Produces ATP from ADP in the presence of a proton gradient across the membrane. The alpha chain is a regulatory subunit. The protein is ATP synthase subunit alpha of Methylobacterium nodulans (strain LMG 21967 / CNCM I-2342 / ORS 2060).